The primary structure comprises 317 residues: Melanocyte-stimulating hormone receptor (317 aa).

At 1-37 the chain is on the extracellular side; sequence MVWQGPQRRLLGSLNGTSPATPHFELAANQTGPRCLE. 2 N-linked (GlcNAc...) asparagine glycosylation sites follow: asparagine 15 and asparagine 29. A helical transmembrane segment spans residues 38–63; it reads VSIPNGLFLSLGLVSVVENVLVVAAI. At 64-72 the chain is on the cytoplasmic side; sequence AKNRNLHSP. A helical transmembrane segment spans residues 73–93; that stretch reads MYYFIGCLAVSDLLVSVTNVL. At 94–118 the chain is on the extracellular side; it reads ETAVMLLVEAGALAAQAAVVQQLDD. Residues 119-140 form a helical membrane-spanning segment; the sequence is IIDVLICGSMVSSLCFLGAIAV. Over 141–163 the chain is Cytoplasmic; sequence DRYLSIFYALRYHSIVTLPRAWR. A helical transmembrane segment spans residues 164–183; sequence AISAIWVASVLSSTLFIAYY. At 184–191 the chain is on the extracellular side; sequence NHTAVLLC. Residues 192–211 form a helical membrane-spanning segment; sequence LVSFFVAMLVLMAVLYVHML. Residues 212 to 240 are Cytoplasmic-facing; the sequence is ARARQHARGIARLRKRQHSVHQGFGLKGA. A helical membrane pass occupies residues 241 to 266; it reads ATLTILLGIFFLCWGPFFLHLSLMVL. Residues 267–279 lie on the Extracellular side of the membrane; that stretch reads CPQHPICGCVFQN. A helical membrane pass occupies residues 280 to 300; that stretch reads FNLFLTLIICNSIIDPFIYAF. Residues 301–317 are Cytoplasmic-facing; the sequence is RSQELRKTLQEVVLCSW. The S-palmitoyl cysteine moiety is linked to residue cysteine 315.

This sequence belongs to the G-protein coupled receptor 1 family. In terms of assembly, interacts with MGRN1, but does not undergo MGRN1-mediated ubiquitination; this interaction competes with GNAS-binding and thus inhibits agonist-induced cAMP production. Interacts with OPN3; the interaction results in a decrease in MC1R-mediated cAMP signaling and ultimately a decrease in melanin production in melanocytes.

Its subcellular location is the cell membrane. Functionally, receptor for MSH (alpha, beta and gamma) and ACTH. The activity of this receptor is mediated by G proteins which activate adenylate cyclase. Mediates melanogenesis, the production of eumelanin (black/brown) and phaeomelanin (red/yellow), via regulation of cAMP signaling in melanocytes. The chain is Melanocyte-stimulating hormone receptor (MC1R) from Canis lupus familiaris (Dog).